The sequence spans 425 residues: tRNA(Ile)-lysidine synthase (425 aa).

Residue 27–32 (SGGLDS) coordinates ATP.

Belongs to the tRNA(Ile)-lysidine synthase family.

The protein resides in the cytoplasm. The catalysed reaction is cytidine(34) in tRNA(Ile2) + L-lysine + ATP = lysidine(34) in tRNA(Ile2) + AMP + diphosphate + H(+). Ligates lysine onto the cytidine present at position 34 of the AUA codon-specific tRNA(Ile) that contains the anticodon CAU, in an ATP-dependent manner. Cytidine is converted to lysidine, thus changing the amino acid specificity of the tRNA from methionine to isoleucine. In Streptococcus pneumoniae (strain JJA), this protein is tRNA(Ile)-lysidine synthase.